The chain runs to 370 residues: Homospermidine synthase (370 aa).

This sequence belongs to the deoxyhypusine synthase family. In terms of assembly, homotetramer. NAD(+) serves as cofactor.

It carries out the reaction putrescine + spermidine = sym-homospermidine + propane-1,3-diamine. The protein operates within alkaloid biosynthesis; pyrrolizidine alkaloid biosynthesis. Functionally, catalyzes the transfer of an aminobutyl unit from spermidine onto putrescine. The resulting polyamine homospermidine is a precursor in the biosynthesis of pyrrolizidine alkaloids. The polypeptide is Homospermidine synthase (HSS1) (Senecio vulgaris (Common groundsel)).